The primary structure comprises 141 residues: Large ribosomal subunit protein uL11 (141 aa).

This sequence belongs to the universal ribosomal protein uL11 family. As to quaternary structure, part of the ribosomal stalk of the 50S ribosomal subunit. Interacts with L10 and the large rRNA to form the base of the stalk. L10 forms an elongated spine to which L12 dimers bind in a sequential fashion forming a multimeric L10(L12)X complex. Post-translationally, one or more lysine residues are methylated.

Functionally, forms part of the ribosomal stalk which helps the ribosome interact with GTP-bound translation factors. The chain is Large ribosomal subunit protein uL11 from Pelodictyon phaeoclathratiforme (strain DSM 5477 / BU-1).